Here is an 889-residue protein sequence, read N- to C-terminus: Chromatin structure-remodeling complex subunit RSC2 (889 aa).

Residues 12–120 (QNSSALYKDL…KYLKDTIYPN (109 aa)) enclose the Bromo 1 domain. The segment at 151 to 268 (EKAEEVARAN…QVSRTQVKRG (118 aa)) is disordered. Residues 158 to 174 (RANAARAESSSSMNSTE) are compositionally biased toward low complexity. The segment covering 197–209 (NNDEDYEATDMDI) has biased composition (acidic residues). The segment covering 210–222 (DNPKDADFPDLIR) has biased composition (basic and acidic residues). Residues 241–250 (STTPSHSGTP) are compositionally biased toward polar residues. Basic residues predominate over residues 255 to 268 (PRHRQVSRTQVKRG). One can recognise a Bromo 2 domain in the interval 280–382 (RMKNVMKVLK…KTFTSLARFE (103 aa)). In terms of domain architecture, BAH spans 408–526 (ISYHVGDWAL…ESDKIFNKIR (119 aa)). The interval 601–624 (GEYATSDDCPRYIIRPNDSPEEGQ) is disordered. Tyr-612 carries the phosphotyrosine modification. Ser-682 bears the Phosphoserine mark. The disordered stretch occupies residues 831-865 (EVEETMEDVTGKDKDDDGLEPDVENEKESLPGPFV).

The protein belongs to the RSC1 family. As to quaternary structure, component of the two forms of the RSC complex composed of at least either RSC1 or RSC2, and ARP7, ARP9, LDB7, NPL6, RSC3, RSC30, RSC4, RSC58, RSC6, RSC8, RSC9, SFH1, STH1, HTL1 and probably RTT102. The complexes interact with histone and histone variant components of centromeric chromatin.

It is found in the nucleus. Its function is as follows. Component of the chromatin structure remodeling complex (RSC), which is involved in transcription regulation and nucleosome positioning. RSC is responsible for the transfer of a histone octamer from a nucleosome core particle to naked DNA. The reaction requires ATP and involves an activated RSC-nucleosome intermediate. Remodeling reaction also involves DNA translocation, DNA twist and conformational change. As a reconfigurer of centromeric and flanking nucleosomes, RSC complex is required both for proper kinetochore function in chromosome segregation and, via a PKC1-dependent signaling pathway, for organization of the cellular cytoskeleton. This subunit is involved in meiotic sporulation through regulating IME2 expression, and is also essential for 2-micron plasmid maintenance and for normal REP1 protein localization. The protein is Chromatin structure-remodeling complex subunit RSC2 (RSC2) of Saccharomyces cerevisiae (strain ATCC 204508 / S288c) (Baker's yeast).